Here is a 235-residue protein sequence, read N- to C-terminus: Thaumatin I (235 aa).

A signal peptide spans 1 to 22 (MAATTCFFFLFPFLLLLTLSRA). 8 cysteine pairs are disulfide-bonded: cysteine 31/cysteine 226, cysteine 78/cysteine 88, cysteine 93/cysteine 99, cysteine 143/cysteine 215, cysteine 148/cysteine 199, cysteine 156/cysteine 167, cysteine 171/cysteine 180, and cysteine 181/cysteine 186. A propeptide spans 230–235 (LELEDE) (removed in mature form).

It belongs to the thaumatin family.

The protein localises to the cytoplasmic vesicle. In terms of biological role, taste-modifying protein; intensely sweet-tasting. It is 100000 times sweeter than sucrose on a molar basis. The polypeptide is Thaumatin I (Thaumatococcus daniellii (Katemfe)).